The chain runs to 600 residues: MKGWNVIVIGGGHAGLEAAWAAAKFSRVALLVGNPATVGRMPCNPAVGGPGKSQLVFEVQALGGLMGRLADDTAIHTRMLNASKGPAVQSLRVQNERDAYAERAQDVIFGHSEIEIVRGEAADLEQDGQGGWVVVTSDGRRLHARSVVLAAGTFMRGVTWYGRQSRPEGRQGEPPSRFLSAPLERGGHVLKRYKTGTPPRVRADSVRFADLLEIPADPQPRGFTGTPGPRAAESPTWQTHTTPQTHALIQENLHESPMYAGDIEGLGPRYCPSIEDKVVKFAHHDRHLLFVEPDGVQTSEVYLQGFSSSLPPRLQDELVRTLPGFEQAVIQRYAYAVEYDVVDSTELTLNLESKKLPGLFTAGQLNGTSGYEEAAAQGLVAGTAAARRSLGLDEQVIGRETSYLGVLLDDLVFKGSDEPYRMMTSRVEHRLLVRQDNADERMTPIGHALGLVDDAELIRVQEKYARVQSGIKSLSKQRMQGQTADAWLRRPELSLADVETLGATLPAELGASEREAVEIRVKYAGYIARAESQLRSEAKARELSLSGVNFAGITALSNEAREKLTRLQPQTVEQASRISGVRHADISALLVHLKGQRVGS.

Position 10-15 (10-15) interacts with FAD; the sequence is GGGHAG. A disordered region spans residues 216-239; sequence ADPQPRGFTGTPGPRAAESPTWQT. Residue 267-281 participates in NAD(+) binding; that stretch reads GPRYCPSIEDKVVKF.

It belongs to the MnmG family. In terms of assembly, homodimer. Heterotetramer of two MnmE and two MnmG subunits. It depends on FAD as a cofactor.

Its subcellular location is the cytoplasm. Functionally, NAD-binding protein involved in the addition of a carboxymethylaminomethyl (cmnm) group at the wobble position (U34) of certain tRNAs, forming tRNA-cmnm(5)s(2)U34. This is tRNA uridine 5-carboxymethylaminomethyl modification enzyme MnmG from Deinococcus radiodurans (strain ATCC 13939 / DSM 20539 / JCM 16871 / CCUG 27074 / LMG 4051 / NBRC 15346 / NCIMB 9279 / VKM B-1422 / R1).